A 524-amino-acid polypeptide reads, in one-letter code: MGKGFLDCESLVALQEMALHPIDLTASGCLSEERIQKNSLSAEGFTYSYATERVDDRCLEALQGLTEERELIKQMECMQQGAIMNRIEGFQSESRPVLHTATRAWVRDQDLHEEAAAIARHSKEEALRLAEFLYIARAKFSTLVQMGIGGSELGPKAMYFAMQGSCPSDKRIFFVSNIDPDNAAEVLREIDLEQTLVVVVSKSGTTLEPAANEELFRQAYQNKGLSIAKHFVAVTSQGSPMDDKSRYLEVFHLWDSIGGRFSATSMVGGVVLGFAFGYEAFIEFLQGAAAIDAHALTPKMRENLPLLSAMLGVWNRNLLGYPTTAVIPYSTGLKYFTAHLQQCGMESNGKSISREGKEISFRTSPIIWGDVGTNCQHSFFQSLHQGTDIVPVEFIGFLHNQRGLDCVLSGSSSSQKLFANLVAQSLALAQGRDNANSNKRFKGNRPSSILVAQQLSPRIAGSLLAFYEHKFAFQGFCWGINSFDQEGVSLGKELATQIIGIMSGNAPVEFPEARGMLRLFNVLT.

Glutamate 346 functions as the Proton donor in the catalytic mechanism. Active-site residues include histidine 377 and lysine 492.

It belongs to the GPI family.

It localises to the cytoplasm. The enzyme catalyses alpha-D-glucose 6-phosphate = beta-D-fructose 6-phosphate. It participates in carbohydrate biosynthesis; gluconeogenesis. Its pathway is carbohydrate degradation; glycolysis; D-glyceraldehyde 3-phosphate and glycerone phosphate from D-glucose: step 2/4. Its function is as follows. Catalyzes the reversible isomerization of glucose-6-phosphate to fructose-6-phosphate. This is Glucose-6-phosphate isomerase from Chlamydia trachomatis serovar A (strain ATCC VR-571B / DSM 19440 / HAR-13).